A 365-amino-acid chain; its full sequence is Serpentine receptor class epsilon-21 (365 aa).

Transmembrane regions (helical) follow at residues 49–69 (ILIN…VFCI), 82–102 (IIIS…FVFI), 116–136 (LLFW…HTLL), 158–178 (VWIA…YAFL), 189–209 (IFIV…IIYF), 250–270 (VVVV…PIIL), and 292–314 (PLVV…LSYY).

It belongs to the nematode receptor-like protein sre family.

It localises to the membrane. This Caenorhabditis elegans protein is Serpentine receptor class epsilon-21 (sre-21).